Here is a 207-residue protein sequence, read N- to C-terminus: MNINAPPKRIGIMGGTFDPLHYGHLVAAEMARHEFALEKVIFIPTGNPPHKVGRRVTSSGDRYEMVKRAVQDNSFFEVSDLEIQRKGYSYTVDTLKDMHKLYPQHELYFITGADAFREIFTWREVQSVLSLSHFIGASRPGFDPHEFLEELKRDYPEFLPHMHLFDVPALAISSTDIRSRVKEGKPIRYLLPESVRLYIEETGLYRI.

Belongs to the NadD family.

The catalysed reaction is nicotinate beta-D-ribonucleotide + ATP + H(+) = deamido-NAD(+) + diphosphate. The protein operates within cofactor biosynthesis; NAD(+) biosynthesis; deamido-NAD(+) from nicotinate D-ribonucleotide: step 1/1. In terms of biological role, catalyzes the reversible adenylation of nicotinate mononucleotide (NaMN) to nicotinic acid adenine dinucleotide (NaAD). This Desulfitobacterium hafniense (strain DSM 10664 / DCB-2) protein is Probable nicotinate-nucleotide adenylyltransferase.